Consider the following 133-residue polypeptide: Holo-[acyl-carrier-protein] synthase (133 aa).

Mg(2+) is bound by residues D8 and E57.

Belongs to the P-Pant transferase superfamily. AcpS family. It depends on Mg(2+) as a cofactor.

It is found in the cytoplasm. It carries out the reaction apo-[ACP] + CoA = holo-[ACP] + adenosine 3',5'-bisphosphate + H(+). Functionally, transfers the 4'-phosphopantetheine moiety from coenzyme A to a Ser of acyl-carrier-protein. This chain is Holo-[acyl-carrier-protein] synthase, found in Caulobacter vibrioides (strain ATCC 19089 / CIP 103742 / CB 15) (Caulobacter crescentus).